Reading from the N-terminus, the 667-residue chain is UvrABC system protein B (667 aa).

The Helicase ATP-binding domain maps to 31–414; the sequence is KNFEAGAKAQ…EAEQTDIQVD (384 aa). 44-51 is an ATP binding site; the sequence is GATGTGKT. The Beta-hairpin signature appears at 97–120; that stretch reads YYDYYQPEAYVPSSDTYIEKDSSI. In terms of domain architecture, Helicase C-terminal spans 435–597; that stretch reads QIDDLVGEIN…ITPKTIIKPI (163 aa). The UVR domain maps to 630-665; it reads LEMVERLSEQMRLAAKKLDFEQAATLRDTILELKSE.

The protein belongs to the UvrB family. As to quaternary structure, forms a heterotetramer with UvrA during the search for lesions. Interacts with UvrC in an incision complex.

The protein resides in the cytoplasm. In terms of biological role, the UvrABC repair system catalyzes the recognition and processing of DNA lesions. A damage recognition complex composed of 2 UvrA and 2 UvrB subunits scans DNA for abnormalities. Upon binding of the UvrA(2)B(2) complex to a putative damaged site, the DNA wraps around one UvrB monomer. DNA wrap is dependent on ATP binding by UvrB and probably causes local melting of the DNA helix, facilitating insertion of UvrB beta-hairpin between the DNA strands. Then UvrB probes one DNA strand for the presence of a lesion. If a lesion is found the UvrA subunits dissociate and the UvrB-DNA preincision complex is formed. This complex is subsequently bound by UvrC and the second UvrB is released. If no lesion is found, the DNA wraps around the other UvrB subunit that will check the other stand for damage. The protein is UvrABC system protein B of Latilactobacillus sakei subsp. sakei (strain 23K) (Lactobacillus sakei subsp. sakei).